The sequence spans 29 residues: Glucagon (29 aa).

The protein belongs to the glucagon family.

Its subcellular location is the secreted. In terms of biological role, promotes hydrolysis of glycogen and lipids, and raises the blood sugar level. This chain is Glucagon (gcg), found in Torpedo marmorata (Marbled electric ray).